We begin with the raw amino-acid sequence, 501 residues long: Melianol synthase CYP71BQ5 (501 aa).

A helical transmembrane segment spans residues 1 to 21 (MEFRLPVLLSFLLFFLMLVRH). Cysteine 439 is a heme binding site.

Belongs to the cytochrome P450 family. Heme serves as cofactor. As to expression, mainly expressed in petioles and roots, and, to a lower extent, in leaves.

It localises to the membrane. The enzyme catalyses dihydroniloticin + 2 reduced [NADPH--hemoprotein reductase] + 2 O2 = melianol + 2 oxidized [NADPH--hemoprotein reductase] + 3 H2O + 2 H(+). It functions in the pathway secondary metabolite biosynthesis; terpenoid biosynthesis. Monooxygenase involved in the biosynthesis of limonoids triterpene natural products such as azadirachtin, an antifeedant widely used as bioinsecticide, and possessing many medicinal applications including anti-tumoral, anti-malarial, anti-rheumatic, antibacterial, anti-inflammatory, anti-pyretic and diuretic effects. Catalyzes the conversion of dihydroniloticin to the protolimonoid melianol. This chain is Melianol synthase CYP71BQ5, found in Melia azedarach (Chinaberry tree).